A 208-amino-acid polypeptide reads, in one-letter code: Endo-1,4-beta-xylanase B (208 aa).

The signal sequence occupies residues 1–16 (MKVTAAFAGLLATTLA). Residues 17 to 207 (APATELVTRS…GTGTASVTVS (191 aa)) form the GH11 domain. Catalysis depends on E101, which acts as the Nucleophile. Residue E194 is the Proton donor of the active site.

This sequence belongs to the glycosyl hydrolase 11 (cellulase G) family.

The protein localises to the secreted. It carries out the reaction Endohydrolysis of (1-&gt;4)-beta-D-xylosidic linkages in xylans.. The protein operates within glycan degradation; xylan degradation. With respect to regulation, N-bromosuccinimide completely inhibits the catalytic activity. Functionally, endo-1,4-beta-xylanase involved in the hydrolysis of xylan, a major structural heterogeneous polysaccharide found in plant biomass representing the second most abundant polysaccharide in the biosphere, after cellulose. The chain is Endo-1,4-beta-xylanase B (xynB) from Talaromyces purpureogenus (Soft rot fungus).